A 220-amino-acid chain; its full sequence is Adenylate kinase (220 aa).

10 to 15 is an ATP binding site; sequence GAGKGT. The NMP stretch occupies residues 30 to 59; it reads STGDMLRAAVKAGTPLGVEAKGYMDAGKLV. AMP contacts are provided by residues T31, R36, 57 to 59, 85 to 88, and Q92; these read KLV and GFPR. The segment at 122–159 is LID; sequence GRRTHPASGRTYHVKFNPPKVEGHDDVTGEPLIQRDDD. ATP is bound by residues R123 and 132 to 133; that span reads TY. Positions 156 and 167 each coordinate AMP. G206 is a binding site for ATP.

The protein belongs to the adenylate kinase family. In terms of assembly, monomer.

The protein resides in the cytoplasm. The enzyme catalyses AMP + ATP = 2 ADP. The protein operates within purine metabolism; AMP biosynthesis via salvage pathway; AMP from ADP: step 1/1. In terms of biological role, catalyzes the reversible transfer of the terminal phosphate group between ATP and AMP. Plays an important role in cellular energy homeostasis and in adenine nucleotide metabolism. The chain is Adenylate kinase from Burkholderia cenocepacia (strain HI2424).